A 569-amino-acid chain; its full sequence is AP-4 complex accessory subunit Tepsin (569 aa).

Residues 8-141 (RDRLSFLHRL…FSDALPQPPS (134 aa)) form the ENTH domain. The disordered stretch occupies residues 196 to 298 (VRPGPDNPCT…SGASREPGDL (103 aa)). Residues 219-229 (VTPSASHTHPN) are compositionally biased toward polar residues. Over residues 260–292 (SSPSSQNSSCTSNLSRASDSVSRSGSDSHSGAS) the composition is skewed to low complexity. Residue S400 is modified to Phosphoserine. Residues 467–524 (VPRSPVPTPSPDTLPPALQDPGELRTQLVCSSEPGTGSEQRLENTDTPKDSSSPCPWS) form a disordered region. Residues 470–480 (SPVPTPSPDTL) show a composition bias toward pro residues. The span at 494 to 505 (LVCSSEPGTGSE) shows a compositional bias: polar residues. Residues 506–515 (QRLENTDTPK) are compositionally biased toward basic and acidic residues. An interaction with AP4B1 region spans residues 525–535 (PNSLFAGMELV). Residues 559 to 569 (SEPSAFAFLNM) are interaction with AP4E1.

Interacts with AP4B1 and AP4E1; the interaction is direct and mediates the association of TEPSIN with the adapter-like complex 4 (AP-4), a heterotetramer composed of AP4B1, AP4E1, AP4M1 and AP4S1.

It is found in the golgi apparatus. The protein localises to the trans-Golgi network membrane. Its subcellular location is the cytoplasmic vesicle. It localises to the cytoplasm. The protein resides in the cytosol. Its function is as follows. Associates with the adapter-like complex 4 (AP-4) and may therefore play a role in vesicular trafficking of proteins at the trans-Golgi network. This is AP-4 complex accessory subunit Tepsin from Rattus norvegicus (Rat).